The sequence spans 2332 residues: Phosphatidylinositol phosphatase PTPRQ (2332 aa).

An N-terminal signal peptide occupies residues 1–35 (MKKVPIKPEQPEKLRAFNISTHSFSLHWSLPSGHV). Fibronectin type-III domains are found at residues 36 to 99 (ERYQ…TKPG), 100 to 195 (PPVF…TAES), 199 to 294 (KVVN…SSST), 350 to 438 (PPQN…PPDV), 441 to 539 (AVFD…SHPD), 514 to 606 (GLYE…SVRT), 610 to 705 (VPSS…TSED), 710 to 799 (SPQD…TSET), 804 to 894 (APEN…TEED), 899 to 988 (PPQD…TPEG), 993 to 1093 (PPKD…TDQD), 1098 to 1190 (FVGN…TEED), 1192 to 1282 (PETS…TDES), 1287 to 1380 (PPQN…TQES), 1384 to 1470 (VVQN…LPET), 1474 to 1578 (VPTN…TLPG), 1583 to 1681 (PPEN…TLES), and 1686 to 1787 (PPNN…IKAP). Over 36–1947 (ERYQVDLVPD…GEGLSERTVE (1912 aa)) the chain is Extracellular. Residue asparagine 94 is glycosylated (N-linked (GlcNAc...) asparagine). Asparagine 202 and asparagine 394 each carry an N-linked (GlcNAc...) asparagine glycan. 4 N-linked (GlcNAc...) asparagine glycosylation sites follow: asparagine 944, asparagine 1038, asparagine 1080, and asparagine 1101. Residues asparagine 1290 and asparagine 1295 are each glycosylated (N-linked (GlcNAc...) asparagine). The N-linked (GlcNAc...) asparagine glycan is linked to asparagine 1844. A helical membrane pass occupies residues 1948–1968 (IILSVTLCILSIILLGTAIFA). Topologically, residues 1969 to 2332 (FARIRQKQKE…VELEWEETTM (364 aa)) are cytoplasmic. A Tyrosine-protein phosphatase domain is found at 2036–2292 (FQEEFSELPK…IFLHQCILDL (257 aa)). Catalysis depends on cysteine 2233, which acts as the Phosphocysteine intermediate.

Belongs to the protein-tyrosine phosphatase family. Receptor class 2A subfamily. As to quaternary structure, interacts with TPRN. TPRN, CLIC5 and PTPQR form concentric rings at the base of stereocilia and may form a complex. As to expression, in developing kidney, it localizes to the basal membrane of podocytes, beginning when podocyte progenitors can first be identified in the embryonic kidney (at protein level). Expressed in lung and kidney.

It is found in the cell projection. Its subcellular location is the stereocilium. The protein localises to the apical cell membrane. It localises to the basal cell membrane. The catalysed reaction is a 1,2-diacyl-sn-glycero-3-phospho-(1D-myo-inositol-3,4,5-trisphosphate) + H2O = a 1,2-diacyl-sn-glycero-3-phospho-(1D-myo-inositol-4,5-bisphosphate) + phosphate. It carries out the reaction a 1,2-diacyl-sn-glycero-3-phospho-(1D-myo-inositol-3,4,5-trisphosphate) + H2O = a 1,2-diacyl-sn-glycero-3-phospho-(1D-myo-inositol-3,4-bisphosphate) + phosphate. The enzyme catalyses a 1,2-diacyl-sn-glycero-3-phospho-(1D-myo-inositol-3,5-bisphosphate) + H2O = a 1,2-diacyl-sn-glycero-3-phospho-(1D-myo-inositol-5-phosphate) + phosphate. It catalyses the reaction a 1,2-diacyl-sn-glycero-3-phospho-(1D-myo-inositol-3,5-bisphosphate) + H2O = a 1,2-diacyl-sn-glycero-3-phospho-(1D-myo-inositol-3-phosphate) + phosphate. Its function is as follows. Dephosphorylates phosphatidylinositol phosphates, such as phosphatidylinositol 3,4,5-trisphosphate (PIP3) and phosphatidylinositol 3,5-diphosphates, with preference for PIP3. Phosphate can be hydrolyzed from the D3 and D5 positions in the inositol ring. Has low tyrosine-protein phosphatase activity in vitro; however, the relevance of such activity in vivo is unclear. Plays an important role in adipogenesis of mesenchymal stem cells (MSCs). Regulates the phosphorylation state of AKT1 by regulating the levels of PIP3 in MSCs and preadipocyte cells. Required for hair bundle maturation, a process that enables hair cells to detect and transmit sound and balance signals effectively, therefore affecting auditory function. May act by regulating the level of phosphatidylinositol 4,5-bisphosphate (PIP2) level in the basal region of hair bundles. The protein is Phosphatidylinositol phosphatase PTPRQ (PTPRQ) of Homo sapiens (Human).